The sequence spans 210 residues: Na(+)-translocating NADH-quinone reductase subunit D (210 aa).

Helical transmembrane passes span 14–34, 42–62, 72–92, 103–123, 131–151, and 178–198; these read PIVS…ALAV, LVMT…ISIL, IIVQ…VLQA, VFVG…AYAM, FMDG…VGFI, and NGLL…IWII.

The protein belongs to the NqrDE/RnfAE family. In terms of assembly, composed of six subunits; NqrA, NqrB, NqrC, NqrD, NqrE and NqrF.

Its subcellular location is the cell inner membrane. It carries out the reaction a ubiquinone + n Na(+)(in) + NADH + H(+) = a ubiquinol + n Na(+)(out) + NAD(+). NQR complex catalyzes the reduction of ubiquinone-1 to ubiquinol by two successive reactions, coupled with the transport of Na(+) ions from the cytoplasm to the periplasm. NqrA to NqrE are probably involved in the second step, the conversion of ubisemiquinone to ubiquinol. This chain is Na(+)-translocating NADH-quinone reductase subunit D, found in Shewanella halifaxensis (strain HAW-EB4).